The sequence spans 660 residues: UvrABC system protein B (660 aa).

The Helicase ATP-binding domain occupies 25–183; that stretch reads EGLNKGLKHQ…ALINIHYERN (159 aa). 38 to 45 is an ATP binding site; that stretch reads GVTGSGKT. Residues 91-114 carry the Beta-hairpin motif; it reads YYDYYQPEAYLPTTDTYIEKDSSV. The 163-residue stretch at 431–593 folds into the Helicase C-terminal domain; the sequence is QIDDLIGEVN…IVPQTIHKAL (163 aa). The region spanning 622–657 is the UVR domain; it reads ADMVIELEAEMHLAAKNLEFERAAALRDNIKELRST.

Belongs to the UvrB family. In terms of assembly, forms a heterotetramer with UvrA during the search for lesions. Interacts with UvrC in an incision complex.

The protein localises to the cytoplasm. Its function is as follows. The UvrABC repair system catalyzes the recognition and processing of DNA lesions. A damage recognition complex composed of 2 UvrA and 2 UvrB subunits scans DNA for abnormalities. Upon binding of the UvrA(2)B(2) complex to a putative damaged site, the DNA wraps around one UvrB monomer. DNA wrap is dependent on ATP binding by UvrB and probably causes local melting of the DNA helix, facilitating insertion of UvrB beta-hairpin between the DNA strands. Then UvrB probes one DNA strand for the presence of a lesion. If a lesion is found the UvrA subunits dissociate and the UvrB-DNA preincision complex is formed. This complex is subsequently bound by UvrC and the second UvrB is released. If no lesion is found, the DNA wraps around the other UvrB subunit that will check the other stand for damage. This is UvrABC system protein B from Methanococcoides burtonii (strain DSM 6242 / NBRC 107633 / OCM 468 / ACE-M).